The following is a 516-amino-acid chain: MNVFFMFSLLFLAALGSCADDRNPLEECFRETDYEEFLEIARNGLKATSNPKHVVIVGAGMSGLSAAYVLAGAGHEVTVLEASERAGGRVRTYRNDEEGWYANLGPMRLPEKHRIVREYIRKFNLQLNEFSQENDNAWHFVKNIRKTVGEVKKDPGVLKYPVKPSEEGKSAEQLYEESLRKVEKELKRTNCSYILNKYDTYSTKEYLIKEGNLSPGAVDMIGDLMNEDAGYYVSFIESMKHDDIFAYEKRFDEIVDGMDKLPTSMYRAIEEKVHFNAQVIKIQKNAEEVTVTYHTPEKDTSFVTADYVIVCTTSRAARRIKFEPPLPLKKAHALRSVHYRSGTKIFLTCTKKFREDEGIHGGKSTTDLPSRFIYYPNHNFTSGVGVIIAYGIGDDANFFQALDLKDCGDIVINDLSLIHQLPREEIQTFCYPSMIQKWSLDKYAMGGITTFTPYQFQHFSEALTSHVDRIYFAGEYTAHAHGWIDSSIKSGLTAARDVNRASENPSGIHLSNDDEL.

Residues 1–18 form the signal peptide; it reads MNVFFMFSLLFLAALGSC. Cysteine 28 and cysteine 191 form a disulfide bridge. FAD contacts are provided by residues 61–62, 81–82, arginine 89, and 105–108; these read MS, EA, and GPMR. Residue arginine 108 coordinates substrate. An N-linked (GlcNAc...) asparagine glycan is attached at asparagine 190. Histidine 241 serves as a coordination point for substrate. Valine 279 contacts FAD. A disulfide bridge connects residues cysteine 349 and cysteine 430. N-linked (GlcNAc...) asparagine glycosylation is present at asparagine 379. Position 390 (tyrosine 390) interacts with substrate. Residues glutamate 475, 481 to 486, and 482 to 487 contribute to the FAD site; these read HGWIDS and GWIDSS. Residues 481 to 482 and 482 to 483 contribute to the substrate site; these read HG and GW.

The protein belongs to the flavin monoamine oxidase family. FIG1 subfamily. In terms of assembly, homodimer; non-covalently linked. It depends on FAD as a cofactor. N-glycosylated. Expressed by the venom gland.

The protein localises to the secreted. The enzyme catalyses an L-alpha-amino acid + O2 + H2O = a 2-oxocarboxylate + H2O2 + NH4(+). Catalyzes an oxidative deamination of predominantly hydrophobic and aromatic L-amino acids, thus producing hydrogen peroxide that may contribute to the diverse toxic effects of this enzyme. Exhibits diverse biological activities, such as hemorrhage, hemolysis, edema, apoptosis of vascular endothelial cells or tumor cell lines, antibacterial and antiparasitic activities, as well as regulation of platelet aggregation. Effects of snake L-amino oxidases on platelets are controversial, since they either induce aggregation or inhibit agonist-induced aggregation. These different effects are probably due to different experimental conditions. Displays dose-dependent inhibition on HIV-1 infection and replication. The protein is L-amino-acid oxidase of Trimeresurus stejnegeri (Chinese green tree viper).